The following is a 302-amino-acid chain: Ribosomal protein L11 methyltransferase (302 aa).

S-adenosyl-L-methionine is bound by residues Thr148, Gly169, Asp191, and Asn237.

The protein belongs to the methyltransferase superfamily. PrmA family.

Its subcellular location is the cytoplasm. The enzyme catalyses L-lysyl-[protein] + 3 S-adenosyl-L-methionine = N(6),N(6),N(6)-trimethyl-L-lysyl-[protein] + 3 S-adenosyl-L-homocysteine + 3 H(+). Methylates ribosomal protein L11. This Desulfosudis oleivorans (strain DSM 6200 / JCM 39069 / Hxd3) (Desulfococcus oleovorans) protein is Ribosomal protein L11 methyltransferase.